Reading from the N-terminus, the 700-residue chain is Neoverrucotoxin subunit beta (700 aa).

The B30.2/SPRY domain maps to 506–700; sequence HMPGVETIKD…QKVNGQIKLL (195 aa).

The protein belongs to the SNTX/VTX toxin family. In terms of assembly, heterodimer of alpha and beta subunits. In terms of processing, not glycosylated. Four intrachain disulfide linkages are present in the heterodimer. No interchain disulfide bound links the two subunits. As to expression, expressed by the venom gland.

The protein localises to the secreted. Functionally, has hemolytic and lethal activities. Its hemolytic activity is inhibited by anionic lipids, especially potently by cardiolipin. The chain is Neoverrucotoxin subunit beta from Synanceia verrucosa (Reef stonefish).